The sequence spans 277 residues: F-actin-capping protein subunit beta isoforms 1 and 2 (277 aa).

Serine 2 bears the N-acetylserine mark.

This sequence belongs to the F-actin-capping protein beta subunit family. Component of the F-actin capping complex, composed of a heterodimer of an alpha and a beta subunit. Component of the WASH complex. As to quaternary structure, component of the F-actin capping complex, composed of a heterodimer of an alpha and a beta subunit. Subunit of dynactin, a multiprotein complex part of a tripartite complex with dynein and a adapter, such as BICDL1, BICD2 or HOOK3. The dynactin complex is built around ACTR1A/ACTB filament and consists of an actin-related filament composed of a shoulder domain, a pointed end and a barbed end. Its length is defined by its flexible shoulder domain. In terms of tissue distribution, isoform 1 is detected in pectoral muscle, cardiac muscle and gizzard. Isoform 2 is detected in brain and liver (at protein level). Isoform 2 is the predominant isoform of nonmuscle tissues and isoform 1 is the predominant isoform of muscle tissues.

It is found in the cytoplasm. The protein resides in the myofibril. The protein localises to the sarcomere. It localises to the z line. Its subcellular location is the i band. It is found in the cytoskeleton. Functionally, F-actin-capping proteins bind in a Ca(2+)-independent manner to the fast growing ends of actin filaments (barbed end) thereby blocking the exchange of subunits at these ends. Unlike other capping proteins (such as gelsolin and severin), these proteins do not sever actin filaments. May play a role in the regulation of cell morphology and cytoskeletal organization. Its function is as follows. Forms, with CAPZB, the barbed end of the fast growing ends of actin filaments in the dynactin complex and stabilizes dynactin structure. The dynactin multiprotein complex activates the molecular motor dynein for ultra-processive transport along microtubules. The protein is F-actin-capping protein subunit beta isoforms 1 and 2 (CAPZB) of Gallus gallus (Chicken).